Reading from the N-terminus, the 160-residue chain is uncharacterized protein (160 aa).

Residues 8 to 46 (CAVCLDFFVEPCIIECGHSYCRFCIESHLNINEKCPLCR) form an RING-type zinc finger.

This is an uncharacterized protein from Caenorhabditis elegans.